Reading from the N-terminus, the 816-residue chain is Fibroblast growth factor receptor 1 (816 aa).

Residues 1–23 (MLSWRHLVFWAMLVMATLSAARP) form the signal peptide. At 24 to 374 (APTLPEQVSP…VIMTSPLYLE (351 aa)) the chain is on the extracellular side. The 94-residue stretch at 25-118 (PTLPEQVSPK…ETTFFAVNVS (94 aa)) folds into the Ig-like C2-type 1 domain. Residues cysteine 54 and cysteine 100 are joined by a disulfide bond. N-linked (GlcNAc...) asparagine glycosylation is found at asparagine 76 and asparagine 116. Residues 118-152 (SDRIPSVEDDDDDDEKSSSEEKEAENSKPNPVAPF) are disordered. Residues 133-143 (KSSSEEKEAEN) are compositionally biased toward basic and acidic residues. Ig-like C2-type domains lie at 156-244 (PEKM…YQLD) and 253-355 (PILQ…AWLT). Cysteine 176 and cysteine 228 are disulfide-bonded. Residues asparagine 238, asparagine 262, asparagine 294, asparagine 315, and asparagine 328 are each glycosylated (N-linked (GlcNAc...) asparagine). Cysteines 275 and 339 form a disulfide. The helical transmembrane segment at 375–395 (IIIYCTGAFLISCMLVTVIIY) threads the bilayer. Residues 396–816 (KMKNTTKKTD…QHANGGLKKR (421 aa)) lie on the Cytoplasmic side of the membrane. Phosphotyrosine; by autocatalysis is present on tyrosine 459. A Protein kinase domain is found at 474–763 (LILGKPLGEG…VAMTSNQEYL (290 aa)). ATP is bound by residues 480 to 486 (LGEGCFG), lysine 510, 558 to 560 (EYA), and asparagine 564. A phosphotyrosine; by autocatalysis mark is found at tyrosine 579 and tyrosine 581. Aspartate 619 (proton acceptor) is an active-site residue. The ATP site is built by arginine 623 and aspartate 637. A phosphotyrosine; by autocatalysis mark is found at tyrosine 649, tyrosine 650, tyrosine 726, and tyrosine 762. The segment at 776–816 (FPDTRSSTCSSGEDSVFSHDPLPDEPCLPKYQHANGGLKKR) is disordered. Residues 779–788 (TRSSTCSSGE) are compositionally biased toward polar residues.

This sequence belongs to the protein kinase superfamily. Tyr protein kinase family. Fibroblast growth factor receptor subfamily. As to quaternary structure, monomer. Homodimer after ligand binding. Autophosphorylated. Binding of FGF family members together with heparan sulfate proteoglycan or heparin promotes receptor dimerization and autophosphorylation on tyrosine residues. Autophosphorylation occurs in trans between the two FGFR molecules present in the dimer and proceeds in a highly ordered manner. Phosphotyrosine residues provide docking sites for interacting proteins and so are crucial for FGFR1 function and its regulation. Post-translationally, ubiquitinated. FGFR1 is rapidly ubiquitinated after autophosphorylation, leading to internalization and degradation. In terms of processing, N-glycosylated in the endoplasmic reticulum. The N-glycan chains undergo further maturation to an Endo H-resistant form in the Golgi apparatus.

The protein resides in the cell membrane. The protein localises to the nucleus. It localises to the cytoplasm. It is found in the cytosol. Its subcellular location is the cytoplasmic vesicle. It carries out the reaction L-tyrosyl-[protein] + ATP = O-phospho-L-tyrosyl-[protein] + ADP + H(+). Present in an inactive conformation in the absence of bound ligand. Ligand binding leads to dimerization and activation by sequential autophosphorylation on tyrosine residues. In terms of biological role, tyrosine-protein kinase that acts as a cell-surface receptor for fibroblast growth factors and plays an essential role in the regulation of embryonic development, cell proliferation, differentiation and migration. Required for normal mesoderm patterning and normal skeletogenesis. Phosphorylates PLCG1, FRS2, GAB1 and SHB. Ligand binding leads to the activation of several signaling cascades. Activation of PLCG1 leads to the production of the cellular signaling molecules diacylglycerol and inositol-1,4,5-trisphosphate. Phosphorylation of FRS2 triggers recruitment of GRB2, GAB1, PIK3R1 and SOS1, and mediates activation of RAS, MAPK1/ERK2, MAPK3/ERK1 and the MAP kinase signaling pathway, as well as of the AKT1 signaling pathway. Promotes phosphorylation of SHC1, STAT1 and PTPN11/SHP2. In the nucleus, enhances RPS6KA1 and CREB1 activity and contributes to the regulation of transcription. FGFR1 signaling is down-regulated by ubiquitination, internalization and degradation. The protein is Fibroblast growth factor receptor 1 (FGFR1) of Pleurodeles waltl (Iberian ribbed newt).